We begin with the raw amino-acid sequence, 102 residues long: MPGQKIRIKLKAYDHELLDESAKKIVEVAKSTNSKVSGPIPLPTERTLYCVLRSPMKHKDSREHFEKRVHKRLIDIIDPSPKTIDALMRINLPAGVDVEIKL.

It belongs to the universal ribosomal protein uS10 family. As to quaternary structure, part of the 30S ribosomal subunit.

Involved in the binding of tRNA to the ribosomes. In Thermotoga maritima (strain ATCC 43589 / DSM 3109 / JCM 10099 / NBRC 100826 / MSB8), this protein is Small ribosomal subunit protein uS10.